A 270-amino-acid polypeptide reads, in one-letter code: uncharacterized protein (270 aa).

2 stretches are compositionally biased toward basic and acidic residues: residues 1-13 (MSEFKIVSRKDLY) and 49-73 (EVERTDSSLDLKESNNSAHEQKEEK). Disordered stretches follow at residues 1 to 76 (MSEF…KQEE), 90 to 111 (STSPAQEEQGSSTQEKDTPQTE), and 204 to 270 (KKRR…FRTE). Positions 90–102 (STSPAQEEQGSST) are enriched in polar residues. A compositionally biased stretch (basic residues) spans 204–216 (KKRRPGQKQRAAK). The segment covering 218-235 (LALERTKERDTKAREIKK) has biased composition (basic and acidic residues). The span at 236–253 (QLKKKFHKRGGKKNKKKV) shows a compositional bias: basic residues.

This is an uncharacterized protein from Saccharomyces cerevisiae (strain ATCC 204508 / S288c) (Baker's yeast).